The sequence spans 451 residues: UDP-N-acetylmuramoylalanine--D-glutamate ligase (451 aa).

118–124 (GTKGKST) serves as a coordination point for ATP.

It belongs to the MurCDEF family.

The protein localises to the cytoplasm. It catalyses the reaction UDP-N-acetyl-alpha-D-muramoyl-L-alanine + D-glutamate + ATP = UDP-N-acetyl-alpha-D-muramoyl-L-alanyl-D-glutamate + ADP + phosphate + H(+). The protein operates within cell wall biogenesis; peptidoglycan biosynthesis. Cell wall formation. Catalyzes the addition of glutamate to the nucleotide precursor UDP-N-acetylmuramoyl-L-alanine (UMA). This Borreliella burgdorferi (strain ZS7) (Borrelia burgdorferi) protein is UDP-N-acetylmuramoylalanine--D-glutamate ligase.